The sequence spans 295 residues: ER-localized J domain-containing protein 5 (295 aa).

The first 20 residues, 1-20, serve as a signal peptide directing secretion; it reads MNGYWKPALVVLGLVSLSYA. Residues 21 to 130 lie on the Lumenal side of the membrane; that stretch reads FTTIETEIFQ…GFYFSRMKPK (110 aa). Residues 42–110 form the J domain; sequence DMNFYKFLKL…RKIYDYYLQN (69 aa). The helical transmembrane segment at 131-151 threads the bilayer; the sequence is TWFLLAFIWIVVNIGQYIISI. Topologically, residues 152-295 are cytoplasmic; that stretch reads IQYRSQRSRI…PNGKVIYSRK (144 aa). The interval 259–287 is disordered; the sequence is KYDGNQTKKGNKVKKGSAKKGQKKMELPN. Over residues 267–280 the composition is skewed to basic residues; the sequence is KGNKVKKGSAKKGQ.

The protein belongs to the DnaJ family.

The protein localises to the endoplasmic reticulum membrane. Functionally, dnaJ-like chaperone required for the folding capacity of the endoplasmic reticulum. The chain is ER-localized J domain-containing protein 5 (ERJ5) from Saccharomyces cerevisiae (strain ATCC 204508 / S288c) (Baker's yeast).